The following is a 208-amino-acid chain: Thymidylate kinase (208 aa).

10 to 17 is an ATP binding site; the sequence is GPEGSGKT.

It belongs to the thymidylate kinase family.

The catalysed reaction is dTMP + ATP = dTDP + ADP. In terms of biological role, phosphorylation of dTMP to form dTDP in both de novo and salvage pathways of dTTP synthesis. The polypeptide is Thymidylate kinase (Bacillus cereus (strain ATCC 10987 / NRS 248)).